Reading from the N-terminus, the 1114-residue chain is MRGALQAVALWGRKAPPHSITAIMITDDQQTIVTGSQEGQLCLWSLSPELKISAKELLFGHSASVTCLARARDFSKQPYVVSAAENGEMCMWNVSSGQCVEKTSLPYRHTAICYYHCSFRMTGEGWLLCCGEYQDVLVLDAGTLAVLHTFTSLQSPDWMKCMCIVHSVRIQEDSLLVVSITGELKVWDLSSSINSIQEKQDVHEKESKFLDSFNCQTIRFCPYTERLLLVVFSKCWKIYDYCDFSLLWTEVSRDGQFFAGGEVLAAHRILVWTEDGHSYIYQLLNRWAQMGATLRTFSGLSKCVCPADGGVLKGTVYPHLLCSTSVEENKSLHFVMGYMNERKEPFYKVLFSGEVSGRITLWHIPDVPISKFDGSPREIPITTTWTLQDNFDKHQMVSQSITDHFSGSRDEVGMTATITSSEYIPNLDKLICGCEDGTIFITKALNAAKAGLLEGDSLLKDSPCHTLLRGHHQSVTSLLYPHNLASKLDQSWMVSGDRGSYVILWDIFTEEILHTFFLEAGPVTRLLMSPENLKRSDGQILCCVCGDHSVALLHLEGRRCLLRARKHLFPVRMIRWHPVENFLIVGCTDDSVYIWEIETGTLERHETGERARIILNCGDDAQLIRSEPTLSVASETHKHKSIEQKSSNSHQPGPVPCPSVQLESSCKVADASSVPRPFNVLPVKTKWSHIGFHVLLFDLENLVELLLPTPLSDVDPSGSFYGGDILRRAKSTVEKKTLTIRRNKASCSSLQTEAQAKPSGDSLVLGDSTSKFSEENNGIKRQKKMKSSKKAHPKPPRKVDASLTIDMAKLFLSCILPWGVDKDLDSLCTRHLSILKLQGPVSLGLASNEDLFSLMLPGWDACSTEMKEYSGVNLCSRKVLDLSSKYTATLLHQTGIPRGLESHCDSVQQSDAIVYLLSRLFLVNKLVNMPLDLACEIDRPFKMETVHSKARFPGSDILNISSFYGHPKNGGNECRAPEADLSLLKLISCWRDQSVQVTEAIQAVLLAEVQQHMKSLRNTPVSSQPDPVAEHSICERMQISAKMEWTEELELQYVGKSSPLKTSVSPVKHGNDLNSANFQDTEDILDRCVLEESESAGQPRHRPWIAKVCSCRMC.

WD repeat units follow at residues 15–54, 60–102, 160–197, 327–373, 413–452, 470–515, and 566–605; these read APPH…KISA, GHSA…CVEK, KCMC…NSIQ, EENK…SKFD, GMTA…KAGL, GHHQ…ILHT, and KHLF…LERH. Disordered stretches follow at residues 634–658 and 749–798; these read SETH…VPCP and SLQT…PPRK. Residues 780–796 show a composition bias toward basic residues; that stretch reads KRQKKMKSSKKAHPKPP. A phosphoserine mark is found at Ser1093 and Ser1095.

As to expression, expressed in maturation stage ameloblasts (at protein level).

It is found in the cytoplasmic vesicle. Functionally, plays a major role in formation of tooth enamel. Specifically required during the maturation phase of amelogenesis for normal formation of the enamel matrix and clearance of enamel proteins. May be involved in localization of the calcium transporter SLC24A4 to the ameloblast cell membrane. This is WD repeat-containing protein 72 from Mus musculus (Mouse).